The primary structure comprises 182 residues: Inorganic pyrophosphatase (182 aa).

Substrate contacts are provided by lysine 30, arginine 44, and tyrosine 56. Aspartate 66, aspartate 71, and aspartate 103 together coordinate Mg(2+). Tyrosine 142 is a substrate binding site.

The protein belongs to the PPase family. In terms of assembly, homohexamer. Requires Mg(2+) as cofactor.

The protein localises to the cytoplasm. It catalyses the reaction diphosphate + H2O = 2 phosphate + H(+). Functionally, catalyzes the hydrolysis of inorganic pyrophosphate (PPi) forming two phosphate ions. The protein is Inorganic pyrophosphatase of Buchnera aphidicola subsp. Acyrthosiphon pisum (strain APS) (Acyrthosiphon pisum symbiotic bacterium).